The following is a 760-amino-acid chain: Xaa-Pro dipeptidyl-peptidase (760 aa).

Catalysis depends on charge relay system residues serine 349, aspartate 469, and histidine 499.

Belongs to the peptidase S15 family. In terms of assembly, homodimer.

It localises to the cytoplasm. It catalyses the reaction Hydrolyzes Xaa-Pro-|- bonds to release unblocked, N-terminal dipeptides from substrates including Ala-Pro-|-p-nitroanilide and (sequentially) Tyr-Pro-|-Phe-Pro-|-Gly-Pro-|-Ile.. In terms of biological role, removes N-terminal dipeptides sequentially from polypeptides having unsubstituted N-termini provided that the penultimate residue is proline. The sequence is that of Xaa-Pro dipeptidyl-peptidase from Streptococcus pyogenes serotype M6 (strain ATCC BAA-946 / MGAS10394).